The following is a 416-amino-acid chain: Gamma-glutamyl phosphate reductase (416 aa).

The protein belongs to the gamma-glutamyl phosphate reductase family.

The protein localises to the cytoplasm. It carries out the reaction L-glutamate 5-semialdehyde + phosphate + NADP(+) = L-glutamyl 5-phosphate + NADPH + H(+). It participates in amino-acid biosynthesis; L-proline biosynthesis; L-glutamate 5-semialdehyde from L-glutamate: step 2/2. Functionally, catalyzes the NADPH-dependent reduction of L-glutamate 5-phosphate into L-glutamate 5-semialdehyde and phosphate. The product spontaneously undergoes cyclization to form 1-pyrroline-5-carboxylate. The sequence is that of Gamma-glutamyl phosphate reductase from Salmonella heidelberg (strain SL476).